A 695-amino-acid polypeptide reads, in one-letter code: Serotransferrin (695 aa).

The first 19 residues, 1–19 (MRLAAGALLACAALGLCLA), serve as a signal peptide directing secretion. 2 consecutive Transferrin-like domains span residues 25 to 347 (VRWC…NLRE) and 361 to 680 (VKWC…NLRK). Cystine bridges form between Cys28–Cys67 and Cys38–Cys58. The residue at position 42 (Arg42) is a Dimethylated arginine. 2 residues coordinate Fe(3+): Asp82 and Tyr114. Cystine bridges form between Cys137–Cys213, Cys156–Cys350, Cys177–Cys193, Cys180–Cys196, Cys190–Cys198, Cys246–Cys260, Cys358–Cys612, Cys364–Cys396, Cys374–Cys387, Cys421–Cys690, Cys436–Cys653, Cys468–Cys539, Cys492–Cys681, Cys502–Cys516, Cys513–Cys522, Cys579–Cys593, and Cys631–Cys636. Positions 139, 143, 145, and 146 each coordinate hydrogencarbonate. Tyr207 serves as a coordination point for Fe(3+). His268 provides a ligand contact to Fe(3+). The residue at position 389 (Ser389) is a Phosphoserine. Fe(3+) contacts are provided by Asp411 and Tyr444. The hydrogencarbonate site is built by Thr470, Arg474, Ala476, and Gly477. Asn509 carries an N-linked (GlcNAc...) asparagine glycan. Fe(3+) is bound at residue Tyr533. Position 601 (His601) interacts with Fe(3+). Position 682 is a phosphoserine (Ser682).

Belongs to the transferrin family. In terms of assembly, monomer. Part of a complex composed of SLC40A1/ferroportin, TF/transferrin and HEPH/hephaestin that transfers iron from cells to transferrin. Expressed by the liver and secreted in plasma.

Its subcellular location is the secreted. Transferrins are iron binding transport proteins which can bind two Fe(3+) ions in association with the binding of an anion, usually bicarbonate. It is responsible for the transport of iron from sites of absorption and heme degradation to those of storage and utilization. Serum transferrin may also have a further role in stimulating cell proliferation. The chain is Serotransferrin (TF) from Oryctolagus cuniculus (Rabbit).